A 141-amino-acid chain; its full sequence is Cystatin-S (141 aa).

A signal peptide spans 1–20 (MARPLCTLLLLMATLAGALA). Phosphoserine occurs at positions 21 and 23. A Secondary area of contact motif is present at residues 76–80 (QTFGG). 2 disulfide bridges follow: Cys-94/Cys-104 and Cys-118/Cys-138.

Belongs to the cystatin family. Phosphorylated at both its N- and C-terminal regions. As to expression, expressed in submandibular and sublingual saliva but not in parotid saliva (at protein level). Expressed in saliva, tears, urine and seminal fluid.

The protein resides in the secreted. Functionally, this protein strongly inhibits papain and ficin, partially inhibits stem bromelain and bovine cathepsin C, but does not inhibit porcine cathepsin B or clostripain. Papain is inhibited non-competitively. The protein is Cystatin-S (CST4) of Homo sapiens (Human).